The following is a 137-amino-acid chain: uncharacterized protein (137 aa).

This is an uncharacterized protein from Saccharomyces cerevisiae (strain ATCC 204508 / S288c) (Baker's yeast).